A 615-amino-acid chain; its full sequence is 1-deoxy-D-xylulose-5-phosphate synthase (615 aa).

Thiamine diphosphate contacts are provided by residues His-72 and 111-113; that span reads GHS. Asp-142 lines the Mg(2+) pocket. Residues 143–144, Asn-171, Tyr-278, and Glu-360 each bind thiamine diphosphate; that span reads GA. Asn-171 lines the Mg(2+) pocket.

It belongs to the transketolase family. DXPS subfamily. Homodimer. The cofactor is Mg(2+). Thiamine diphosphate serves as cofactor.

The catalysed reaction is D-glyceraldehyde 3-phosphate + pyruvate + H(+) = 1-deoxy-D-xylulose 5-phosphate + CO2. It functions in the pathway metabolic intermediate biosynthesis; 1-deoxy-D-xylulose 5-phosphate biosynthesis; 1-deoxy-D-xylulose 5-phosphate from D-glyceraldehyde 3-phosphate and pyruvate: step 1/1. Functionally, catalyzes the acyloin condensation reaction between C atoms 2 and 3 of pyruvate and glyceraldehyde 3-phosphate to yield 1-deoxy-D-xylulose-5-phosphate (DXP). This chain is 1-deoxy-D-xylulose-5-phosphate synthase, found in Campylobacter jejuni (strain RM1221).